A 1342-amino-acid chain; its full sequence is DNA-directed RNA polymerase subunit beta (1342 aa).

Belongs to the RNA polymerase beta chain family. In terms of assembly, the RNAP catalytic core consists of 2 alpha, 1 beta, 1 beta' and 1 omega subunit. When a sigma factor is associated with the core the holoenzyme is formed, which can initiate transcription.

The catalysed reaction is RNA(n) + a ribonucleoside 5'-triphosphate = RNA(n+1) + diphosphate. Its function is as follows. DNA-dependent RNA polymerase catalyzes the transcription of DNA into RNA using the four ribonucleoside triphosphates as substrates. The sequence is that of DNA-directed RNA polymerase subunit beta from Erwinia tasmaniensis (strain DSM 17950 / CFBP 7177 / CIP 109463 / NCPPB 4357 / Et1/99).